The following is a 628-amino-acid chain: E3 SUMO-protein ligase PIAS3 (628 aa).

The interval 1–200 (MAELGELKHM…QLRFCLCETS (200 aa)) is interaction with CCAR2. The region spanning 11–45 (VMSFRVSELQVLLGFAGRNKSGRKHELLAKALHLL) is the SAP domain. Positions 19–23 (LQVLL) match the LXXLL motif motif. Residues Lys-46, Lys-56, Lys-230, and Lys-307 each participate in a glycyl lysine isopeptide (Lys-Gly) (interchain with G-Cter in SUMO2) cross-link. The region spanning 115 to 280 (MHPPLPQPVH…SLSVYLVRQL (166 aa)) is the PINIT domain. The segment at 312–393 (PDSEVATTSL…FMEILNSCSD (82 aa)) adopts an SP-RING-type zinc-finger fold. Zn(2+)-binding residues include Cys-343, His-345, Cys-366, and Cys-369. Positions 450–460 (LTIESSSDEED) are SUMO1-binding. Residues Lys-466 and Lys-482 each participate in a glycyl lysine isopeptide (Lys-Gly) (interchain with G-Cter in SUMO2) cross-link. Residues 571–628 (GPLAPTLGSSHRSSTPAPPPGRVSSIVAPGSSLREGHGGPLPSGPSLTGCRSDVISLD) are disordered.

Belongs to the PIAS family. As to quaternary structure, monomer. Interacts with PLAG1 and ZFHX3. Interacts with STAT5A; the interaction occurs on stimulation by PRL. Binds SUMO1 and UBE2I. Interacts with AR, BCL11A, HMGA2, IRF1 and NCOA2. Interacts with MITF; the interaction inhibits the transcriptional activity of MITF. Interacts with STAT3; the interaction occurs on stimulation by IL6, CNTF or OSM and inhibits the DNA binding activity of STAT3. Interacts with GFI1; the interaction relieves the inhibitory effect of PIAS3 on STAT3-mediated transcriptional activity. Interacts with MTA1. Interacts with CCAR2 (via N-terminus). Interacts with TRIM8. Interacts with PRDM1. Post-translationally, sumoylated. As to expression, expressed in kidney, heart, spleen, brain and cerebellum; weak expression, if any, in liver and lung.

The protein localises to the cytoplasm. It localises to the nucleus. Its subcellular location is the nucleus speckle. Its pathway is protein modification; protein sumoylation. Its function is as follows. Functions as an E3-type small ubiquitin-like modifier (SUMO) ligase, stabilizing the interaction between UBE2I and the substrate, and as a SUMO-tethering factor. Plays a crucial role as a transcriptional coregulation in various cellular pathways, including the STAT pathway and the steroid hormone signaling pathway. Repressor of STAT3 signaling via inhibiting STAT3 DNA-binding and suppressing cell growth. Repressor of MITF transcriptional activity. Enhances the sumoylation of MTA1 and may participate in its paralog-selective sumoylation. Sumoylates CCAR2 which promotes its interaction with SIRT1. Diminishes the sumoylation of ZFHX3 by preventing the colocalization of ZFHX3 with SUMO1 in the nucleus. The chain is E3 SUMO-protein ligase PIAS3 (Pias3) from Mus musculus (Mouse).